The chain runs to 352 residues: Ribosome biogenesis protein BRX1 homolog (352 aa).

The tract at residues 1–55 is disordered; it reads MGKFSKIKKVQEEESAHQKMEWEAAGAKDSSSDDSSDESDNDDQPKQATEETRKR. Positions 9-22 are enriched in basic and acidic residues; that stretch reads KVQEEESAHQKMEW. Over residues 32–42 the composition is skewed to acidic residues; sequence SDDSSDESDND. Basic and acidic residues predominate over residues 43 to 55; the sequence is DQPKQATEETRKR. A Brix domain is found at 63-253; it reads ERVLVLCSRG…MVRLFAGSFE (191 aa).

This sequence belongs to the BRX1 family.

The protein localises to the nucleus. Its subcellular location is the nucleolus. Required for biogenesis of the 60S ribosomal subunit. The protein is Ribosome biogenesis protein BRX1 homolog of Caenorhabditis elegans.